The sequence spans 140 residues: Large ribosomal subunit protein uL16 (140 aa).

Belongs to the universal ribosomal protein uL16 family. As to quaternary structure, part of the 50S ribosomal subunit.

Binds 23S rRNA and is also seen to make contacts with the A and possibly P site tRNAs. The protein is Large ribosomal subunit protein uL16 of Phytoplasma australiense.